Consider the following 354-residue polypeptide: Replication-associated protein (354 aa).

In terms of domain architecture, CRESS-DNA virus Rep endonuclease spans 11-114; it reads SHRSPNTFLT…PLALFERGTF (104 aa). Positions 18-21 match the RCR-1 motif; the sequence is FLTY. The a divalent metal cation site is built by glutamate 52 and histidine 62. An RCR-2 motif is present at residues 60–65; that stretch reads CLHALI. Tyrosine 100 serves as the catalytic For DNA cleavage activity. An RCR-3 motif is present at residues 100–103; the sequence is YITK. Position 104 (glutamate 104) interacts with a divalent metal cation. An oligomerization region spans residues 175 to 187; sequence SANKLFPDIQEEF. Residue 228-235 coordinates ATP; it reads GPTRTGKS. Residues 251-269 are transactivation; the sequence is VDWSSYNEDTIYNIVDDIP. The Nuclear localization signal signature appears at 291–302; sequence KYGKKKKVQMKS.

It belongs to the geminiviridae Rep protein family. In terms of assembly, homooligomer. Rep binds to repeated DNA motifs (iterons). Forms the O-complex, which is a Rep-DNA complex involved in the initiation of RCR. Part of the C- and V-complexes which are RepA-Rep-DNA complexes involved in the c-sense and v-sense transcription. Mg(2+) is required as a cofactor. Mn(2+) serves as cofactor.

It is found in the host nucleus. In terms of biological role, essential for the replication of viral ssDNA. The closed circular ssDNA genome is first converted to a superhelical dsDNA. Rep binds a specific region at the genome origin of replication. It introduces an endonucleolytic nick within the conserved sequence 5'-TAATATTAC-3' in the intergenic region of the genome present in all geminiviruses, thereby initiating the rolling circle replication (RCR). Following cleavage, binds covalently to the 5'-phosphate of DNA as a tyrosyl ester. The cleavage gives rise to a free 3'-OH that serves as a primer for the cellular DNA polymerase. The polymerase synthesizes the (+) strand DNA by rolling circle mechanism. After one round of replication, a Rep-catalyzed nucleotidyl transfer reaction releases a circular single-stranded virus genome, thereby terminating the replication. Displays origin-specific DNA cleavage, nucleotidyl transferase, ATPase and helicase activities. Acts as an inhibitor of C-sense gene transcription. In Maize streak virus genotype C (isolate Set) (MSV), this protein is Replication-associated protein.